The following is a 208-amino-acid chain: Ribosomal RNA large subunit methyltransferase E (208 aa).

S-adenosyl-L-methionine is bound by residues Gly63, Trp65, Asp83, Asp99, and Asp124. Lys164 (proton acceptor) is an active-site residue.

The protein belongs to the class I-like SAM-binding methyltransferase superfamily. RNA methyltransferase RlmE family.

Its subcellular location is the cytoplasm. The enzyme catalyses uridine(2552) in 23S rRNA + S-adenosyl-L-methionine = 2'-O-methyluridine(2552) in 23S rRNA + S-adenosyl-L-homocysteine + H(+). Functionally, specifically methylates the uridine in position 2552 of 23S rRNA at the 2'-O position of the ribose in the fully assembled 50S ribosomal subunit. In Salmonella arizonae (strain ATCC BAA-731 / CDC346-86 / RSK2980), this protein is Ribosomal RNA large subunit methyltransferase E.